The primary structure comprises 474 residues: Chromosomal replication initiator protein DnaA (474 aa).

The segment at 1–90 (MSSSLWLQCL…RQVVVPSSQI (90 aa)) is domain I, interacts with DnaA modulators. A domain II region spans residues 91 to 137 (IAPAAPAVTLAPRPLPATRILQDDAPSRSWEPAPSPVQPESKSGYRS). Residues 112-137 (QDDAPSRSWEPAPSPVQPESKSGYRS) are disordered. Polar residues predominate over residues 128–137 (QPESKSGYRS). A domain III, AAA+ region region spans residues 138-354 (NVNPKHNFNN…GALNRVIANA (217 aa)). 4 residues coordinate ATP: glycine 182, glycine 184, lysine 185, and threonine 186. The interval 355-474 (NFTGRAITID…YSNLIRTLST (120 aa)) is domain IV, binds dsDNA.

It belongs to the DnaA family. As to quaternary structure, oligomerizes as a right-handed, spiral filament on DNA at oriC.

It localises to the cytoplasm. Functionally, plays an essential role in the initiation and regulation of chromosomal replication. ATP-DnaA binds to the origin of replication (oriC) to initiate formation of the DNA replication initiation complex once per cell cycle. Binds the DnaA box (a 9 base pair repeat at the origin) and separates the double-stranded (ds)DNA. Forms a right-handed helical filament on oriC DNA; dsDNA binds to the exterior of the filament while single-stranded (ss)DNA is stabiized in the filament's interior. The ATP-DnaA-oriC complex binds and stabilizes one strand of the AT-rich DNA unwinding element (DUE), permitting loading of DNA polymerase. After initiation quickly degrades to an ADP-DnaA complex that is not apt for DNA replication. Binds acidic phospholipids. This chain is Chromosomal replication initiator protein DnaA, found in Photobacterium profundum (strain SS9).